A 275-amino-acid polypeptide reads, in one-letter code: 3-methyl-2-oxobutanoate hydroxymethyltransferase (275 aa).

Residues Asp44 and Asp83 each coordinate Mg(2+). 3-methyl-2-oxobutanoate is bound by residues 44-45 (DS), Asp83, and Lys113. Glu115 contributes to the Mg(2+) binding site. Glu182 acts as the Proton acceptor in catalysis.

This sequence belongs to the PanB family. As to quaternary structure, homodecamer; pentamer of dimers. Mg(2+) serves as cofactor.

It localises to the cytoplasm. It catalyses the reaction 3-methyl-2-oxobutanoate + (6R)-5,10-methylene-5,6,7,8-tetrahydrofolate + H2O = 2-dehydropantoate + (6S)-5,6,7,8-tetrahydrofolate. It participates in cofactor biosynthesis; (R)-pantothenate biosynthesis; (R)-pantoate from 3-methyl-2-oxobutanoate: step 1/2. Catalyzes the reversible reaction in which hydroxymethyl group from 5,10-methylenetetrahydrofolate is transferred onto alpha-ketoisovalerate to form ketopantoate. The polypeptide is 3-methyl-2-oxobutanoate hydroxymethyltransferase (Clostridium botulinum (strain Kyoto / Type A2)).